A 351-amino-acid polypeptide reads, in one-letter code: MYSLFRPLLFTCDAERAHDISLRTLDIAYHSGALPLLTRHTRPLPTTAFGLNFPNPVGLAAGLDKNGTHIDALFALGFGFIEIGTTTPRPQAGNPKPRLFRLTQQQAVINRMGFNNLGVDALVRNVAGARRRNGPLGINIGKNKDTPNEQASNDYRYCLERVYALADYVTINLSSPNTAGLRALQEEQTLRRLIGELRETQETLAAKHGRHVPMLIKMAPDLSDSDIDAAARVLNEMSVDGVIATNTTVTRPLLRQHPLASEAGGLSGAPLLGQSTLVLRRLRTHLPETIDLIGVGGICCGADAGAKMAAGASLVQCYTGLIFKGPQLVGECVEAIRRRLEASSSGRENTQ.

FMN is bound by residues 61-65 (AGLDK) and Thr85. A substrate-binding site is contributed by Lys65. 110 to 114 (NRMGF) provides a ligand contact to substrate. FMN-binding residues include Asn139 and Asn172. Substrate is bound at residue Asn172. Ser175 (nucleophile) is an active-site residue. Position 177 (Asn177) interacts with substrate. Lys217 and Thr245 together coordinate FMN. 246–247 (NT) contacts substrate. FMN contacts are provided by residues Gly268, Gly297, and 318–319 (YT).

The protein belongs to the dihydroorotate dehydrogenase family. Type 2 subfamily. Monomer. FMN is required as a cofactor.

Its subcellular location is the cell membrane. It carries out the reaction (S)-dihydroorotate + a quinone = orotate + a quinol. It functions in the pathway pyrimidine metabolism; UMP biosynthesis via de novo pathway; orotate from (S)-dihydroorotate (quinone route): step 1/1. In terms of biological role, catalyzes the conversion of dihydroorotate to orotate with quinone as electron acceptor. This is Dihydroorotate dehydrogenase (quinone) from Xylella fastidiosa (strain M23).